Consider the following 354-residue polypeptide: Phosphate acyltransferase (354 aa).

This sequence belongs to the PlsX family. In terms of assembly, homodimer. Probably interacts with PlsY.

It is found in the cytoplasm. The enzyme catalyses a fatty acyl-[ACP] + phosphate = an acyl phosphate + holo-[ACP]. Its pathway is lipid metabolism; phospholipid metabolism. In terms of biological role, catalyzes the reversible formation of acyl-phosphate (acyl-PO(4)) from acyl-[acyl-carrier-protein] (acyl-ACP). This enzyme utilizes acyl-ACP as fatty acyl donor, but not acyl-CoA. This chain is Phosphate acyltransferase, found in Bordetella petrii (strain ATCC BAA-461 / DSM 12804 / CCUG 43448).